The primary structure comprises 147 residues: Spermidine export protein MdtJ (147 aa).

Helical transmembrane passes span 1 to 21 (MIYWIFLGLAIIAEIIGTLSM), 31 to 51 (TGHIVMYFMITGSYVMLSLAV), 54 to 74 (VALGVAYALWEGIGILIITIF), and 81 to 101 (ETLSPLKIAGLVTLIGGILLV). Residues 105–117 (TRKPKQPNRHRGN) show a composition bias toward basic residues. Residues 105–147 (TRKPKQPNRHRGNRPPSVQGLKTQTTGHHKGVAVESGEHHAAA) form a disordered region.

It belongs to the drug/metabolite transporter (DMT) superfamily. Small multidrug resistance (SMR) (TC 2.A.7.1) family. MdtJ subfamily. As to quaternary structure, forms a complex with MdtI.

Its subcellular location is the cell inner membrane. In terms of biological role, catalyzes the excretion of spermidine. In Yersinia pseudotuberculosis serotype O:3 (strain YPIII), this protein is Spermidine export protein MdtJ.